Reading from the N-terminus, the 350-residue chain is Ubiquitin carboxyl-terminal hydrolase 11 (350 aa).

Positions 49-344 (KGLYNVSGND…SACLLFYEME (296 aa)) constitute a USP domain. Residue Cys59 is the Nucleophile of the active site. His302 (proton acceptor) is an active-site residue.

This sequence belongs to the peptidase C19 family.

The enzyme catalyses Thiol-dependent hydrolysis of ester, thioester, amide, peptide and isopeptide bonds formed by the C-terminal Gly of ubiquitin (a 76-residue protein attached to proteins as an intracellular targeting signal).. This chain is Ubiquitin carboxyl-terminal hydrolase 11 (ubp11), found in Schizosaccharomyces pombe (strain 972 / ATCC 24843) (Fission yeast).